We begin with the raw amino-acid sequence, 108 residues long: Glutaredoxin-like protein YDR286C homolog (108 aa).

Cys-22 and Cys-25 are joined by a disulfide.

This sequence belongs to the glutaredoxin family. YDR286C subfamily.

The protein is Glutaredoxin-like protein YDR286C homolog of Dictyostelium discoideum (Social amoeba).